A 566-amino-acid polypeptide reads, in one-letter code: Oxygen-dependent choline dehydrogenase (566 aa).

FAD is bound at residue 7 to 36 (DYIICGAGSAGNVLATRLTEDPNVTVLLLE). The interval 183 to 203 (QQEGFGPMDRTVTPKGRRAST) is disordered. The active-site Proton acceptor is the His-474.

The protein belongs to the GMC oxidoreductase family. The cofactor is FAD.

The catalysed reaction is choline + A = betaine aldehyde + AH2. It catalyses the reaction betaine aldehyde + NAD(+) + H2O = glycine betaine + NADH + 2 H(+). It participates in amine and polyamine biosynthesis; betaine biosynthesis via choline pathway; betaine aldehyde from choline (cytochrome c reductase route): step 1/1. Its function is as follows. Involved in the biosynthesis of the osmoprotectant glycine betaine. Catalyzes the oxidation of choline to betaine aldehyde and betaine aldehyde to glycine betaine at the same rate. The protein is Oxygen-dependent choline dehydrogenase of Burkholderia ambifaria (strain ATCC BAA-244 / DSM 16087 / CCUG 44356 / LMG 19182 / AMMD) (Burkholderia cepacia (strain AMMD)).